Consider the following 134-residue polypeptide: Large ribosomal subunit protein uL22 (134 aa).

This sequence belongs to the universal ribosomal protein uL22 family. Part of the 50S ribosomal subunit.

Its function is as follows. This protein binds specifically to 23S rRNA; its binding is stimulated by other ribosomal proteins, e.g. L4, L17, and L20. It is important during the early stages of 50S assembly. It makes multiple contacts with different domains of the 23S rRNA in the assembled 50S subunit and ribosome. The globular domain of the protein is located near the polypeptide exit tunnel on the outside of the subunit, while an extended beta-hairpin is found that lines the wall of the exit tunnel in the center of the 70S ribosome. This chain is Large ribosomal subunit protein uL22, found in Porphyromonas gingivalis (strain ATCC 33277 / DSM 20709 / CIP 103683 / JCM 12257 / NCTC 11834 / 2561).